Here is a 230-residue protein sequence, read N- to C-terminus: Orotidine 5'-phosphate decarboxylase (230 aa).

Substrate-binding positions include Asp-11, Lys-34, Asp-61–Thr-70, Thr-117, Arg-179, Gln-188, Gly-208, and Arg-209. The active-site Proton donor is the Lys-63.

The protein belongs to the OMP decarboxylase family. Type 1 subfamily. As to quaternary structure, homodimer.

The catalysed reaction is orotidine 5'-phosphate + H(+) = UMP + CO2. It participates in pyrimidine metabolism; UMP biosynthesis via de novo pathway; UMP from orotate: step 2/2. Catalyzes the decarboxylation of orotidine 5'-monophosphate (OMP) to uridine 5'-monophosphate (UMP). This is Orotidine 5'-phosphate decarboxylase from Streptococcus sanguinis (strain SK36).